The chain runs to 339 residues: DNA repair protein RAD51 homolog 1 (339 aa).

The tract at residues 1–22 is disordered; it reads MAMQMQLEASADTSVEEESFGP. Alanine 2 is modified (N-acetylalanine). Threonine 13 carries the post-translational modification Phosphothreonine. At serine 14 the chain carries Phosphoserine. The region spanning 48–77 is the HhH domain; the sequence is TVEAVAYAPKKELINIKGISEAKADKILTE. Phosphotyrosine; by ABL1 is present on tyrosine 54. Glycyl lysine isopeptide (Lys-Gly) (interchain with G-Cter in ubiquitin) cross-links involve residues lysine 58 and lysine 64. ATP is bound at residue 127 to 134; the sequence is GEFRTGKT. The interaction with PALB2 stretch occupies residues 184-257; it reads DVLDNVAYAR…FLRMLLRLAD (74 aa). The Nuclear export signal; masked by the interaction with BRCA2 motif lies at 245-260; the sequence is LARFLRMLLRLADEFG. A Phosphothreonine; by CHEK1 modification is found at threonine 309.

It belongs to the RecA family. RAD51 subfamily. As to quaternary structure, forms linear homooligomers, giving rise to a RAD51 nucleoprotein filament, which is essential for strand-pairing reactions during DNA recombination. Interacts with BRCA1 and either directly or indirectly with p53. Interacts with XRCC3, RAD54L and RAD54B. Interacts with the BCDX2 subcomplex RAD51C:RAD51B. Component of the homologous recombination repair (HR) complex composed of ERCC5/XPG, BRCA2, PALB2, DSS1 and RAD51. Interacts directly with PALB2 which may serve as a scaffold for a HR complex containing PALB2, BRCA2, RAD51C, RAD51 and XRCC3. Interacts with RAD51AP1 and RAD51AP2. Interacts with CHEK1, and this may require prior phosphorylation of CHEK1. Interacts with the MND1-PSMC3IP heterodimer. Found in a complex, at least composed of BLM, RAD51 and SPIDR; the complex formation is mediated by SPIDR. Interacts with SPIDR; the interaction is direct and recruits RAD51 to DNA damage sites. Interacts with FIGNL1 (via N-terminal one-half region); the interaction is direct. Interacts with RAD51AP1 (via C-terminal region); the interaction is direct. Interacts with NABP2, RPA1, PALB2 and RAD51. Interacts with SWI5/C9orf119, and at lower level with SFR1/MEIR5. Interacts with hyperphosphorylated RPA2; this interaction is necessary for efficient recruitment to chromatin in response to DNA damage. Interacts with SWSAP1; involved in homologous recombination repair. Interacts with PARPBP, BRCA2 and RECQL5; these interactions interfere with the formation of the RAD51-DNA homologous recombination structure. Interacts with POLQ; POLQ acts as an inhibitor of homology-recombination repair (HR) pathway by limiting RAD51 accumulation at resected ends. Interacts with POLN. Interacts with FBH1. Interacts with RFWD3. Interacts with the MCM8-MCM9 complex; the interaction recruits RAD51 to DNA damage sites. Component of a multiprotein complex with MEIOB and SPATA22. Interacts with the complex BRME1:HSF2BP:BRCA2. Interacts with HELQ; stimulating HELQ DNA helicase activity and ability to unwing DNA. Interacts with MMS22L; the interaction is direct and promotes recruitment of RAD51 to sites of DNA damage. Interacts with the ATAD5 RFC-like complex. Within the ATAD5 RFC-like complex, interacts with ATAD5 (via N-terminus); the interaction is direct and enhanced under replication stress. Interacts with WDR48; the interaction is enhanced under replication stress. Interacts with DNA helicase ZGRF1; the interaction promotes RAD51 strand exchange activity. Interacts (when phosphorylated) with TOPBP1; interaction takes place following phosphorylation by CK2 and PLK1 and promotes recruitment to DNA damage sites. Interacts with GRB2; this interaction inhibits RAD51 ATPase activity to stabilize RAD51 on stalled replication forks. In terms of processing, ubiquitinated by the SCF(FBH1) E3 ubiquitin ligase complex, regulating RAD51 subcellular location and preventing its association with DNA. Ubiquitinated by RFWD3 in response to DNA damage: ubiquitination leads to degradation by the proteasome, promoting homologous recombination. Phosphorylation of Thr-309 by CHEK1 may enhance association with chromatin at sites of DNA damage and promote DNA repair by homologous recombination. Phosphorylated at Ser-14 by PLK1, triggering phosphorylation at Thr-13 by CK2, thereby promoting interaction with TOPBP1 and recruitment to DNA damage sites during S-phase. Phosphorylation by ABL1 inhibits function. In terms of tissue distribution, expressed in the testes (at protein level). Expressed in the brain (at protein level). Expressed in the thymus, spleen, ovary and small intestine.

It localises to the nucleus. The protein resides in the cytoplasm. The protein localises to the perinuclear region. It is found in the mitochondrion matrix. Its subcellular location is the chromosome. It localises to the cytoskeleton. The protein resides in the microtubule organizing center. The protein localises to the centrosome. Its function is as follows. Plays an important role in homologous strand exchange, a key step in DNA repair through homologous recombination (HR). Binds to single-stranded DNA in an ATP-dependent manner to form nucleoprotein filaments which are essential for the homology search and strand exchange. Catalyzes the recognition of homology and strand exchange between homologous DNA partners to form a joint molecule between a processed DNA break and the repair template. Recruited to resolve stalled replication forks during replication stress. Part of a PALB2-scaffolded HR complex containing BRCA2 and RAD51C and which is thought to play a role in DNA repair by HR. Plays a role in regulating mitochondrial DNA copy number under conditions of oxidative stress in the presence of RAD51C and XRCC3. Also involved in interstrand cross-link repair. This Mus musculus (Mouse) protein is DNA repair protein RAD51 homolog 1.